The following is a 140-amino-acid chain: MAHTMRVDVVSAEEEIFSGEAEFVALPGESGELGILPGHTPLITRIRPGAVRIKVTGQAEDEFVFVAGGILEVQPHVVTVLADTAIRGGDLDEAKAAEAKQLAEEALVNKESKIDYAQAQAELASAIAQLAAIQRLRQKR.

The protein belongs to the ATPase epsilon chain family. As to quaternary structure, F-type ATPases have 2 components, CF(1) - the catalytic core - and CF(0) - the membrane proton channel. CF(1) has five subunits: alpha(3), beta(3), gamma(1), delta(1), epsilon(1). CF(0) has three main subunits: a, b and c.

It is found in the cell inner membrane. In terms of biological role, produces ATP from ADP in the presence of a proton gradient across the membrane. This Janthinobacterium sp. (strain Marseille) (Minibacterium massiliensis) protein is ATP synthase epsilon chain.